The sequence spans 271 residues: Structure-specific endonuclease subunit SLX1 (271 aa).

A GIY-YIG domain is found at 9–94; that stretch reads RFFGVYLLYC…PQASRRLTHV (86 aa). The SLX1-type zinc finger occupies 182-234; the sequence is CTLCARMLQDEEGPLCCPHPGCPLRAHIICLAEEFLQEEPGQLLPLEGHCPSC.

This sequence belongs to the SLX1 family. Forms a heterodimer with SLX4. It depends on a divalent metal cation as a cofactor.

It is found in the nucleus. Catalytic subunit of the SLX1-SLX4 structure-specific endonuclease that resolves DNA secondary structures generated during DNA repair and recombination. Has endonuclease activity towards branched DNA substrates, introducing single-strand cuts in duplex DNA close to junctions with ss-DNA. Has a preference for 5'-flap structures, and promotes symmetrical cleavage of static and migrating Holliday junctions (HJs). Resolves HJs by generating two pairs of ligatable, nicked duplex products. This Rattus norvegicus (Rat) protein is Structure-specific endonuclease subunit SLX1 (Slx1b).